The primary structure comprises 45 residues: Large ribosomal subunit protein bL34 (45 aa).

The tract at residues 1–45 is disordered; that stretch reads MTKRTFGGTSRKRKRVSGFRVRMRSHTGRRVIKSRRQKGRERIAV. Residues 10–39 are compositionally biased toward basic residues; that stretch reads SRKRKRVSGFRVRMRSHTGRRVIKSRRQKG.

Belongs to the bacterial ribosomal protein bL34 family.

In Prochlorococcus marinus (strain MIT 9301), this protein is Large ribosomal subunit protein bL34.